Consider the following 732-residue polypeptide: Protein FAR1-RELATED SEQUENCE 4 (732 aa).

Residues L11 to P97 form the FAR1 domain. The MULE domain maps to V212 to P308. The SWIM-type zinc finger occupies Y490 to G526. The disordered stretch occupies residues Q623–G683. Residues E624–I635 are compositionally biased toward polar residues.

It belongs to the FHY3/FAR1 family. Expressed in hypocotyls, rosette and cauline leaves, inflorescences stems, flowers and siliques.

It localises to the nucleus. Putative transcription activator involved in regulating light control of development. This chain is Protein FAR1-RELATED SEQUENCE 4 (FRS4), found in Arabidopsis thaliana (Mouse-ear cress).